A 1935-amino-acid chain; its full sequence is Rho GTPase-activating protein 21 (1935 aa).

Residues Met1–Trp46 form a disordered region. The PDZ domain maps to His78–Asp163. Disordered stretches follow at residues Val212 to Pro237, Pro339 to His373, Gln413 to Leu456, Thr673 to Ser718, and Asn862 to Ser919. Polar residues-rich tracts occupy residues Ser217–Pro237, Ser348–His373, and Gln413–Gln429. Low complexity-rich tracts occupy residues Pro441–Val451 and Thr673–Thr685. Residues Ser708–Ser718 show a composition bias toward polar residues. Over residues Ser863 to Leu884 the composition is skewed to basic and acidic residues. Positions Asp920–Asn1033 constitute a PH domain. A disordered region spans residues Thr1056–Lys1126. Residues Ser1059–Ser1072 are compositionally biased toward low complexity. Residues Pro1097–Ser1119 are compositionally biased toward basic and acidic residues. The 193-residue stretch at Val1140–Phe1332 folds into the Rho-GAP domain. 7 disordered regions span residues Ile1341 to Lys1393, Arg1411 to Asn1431, Ser1488 to Pro1510, Ser1525 to Val1548, His1637 to Pro1665, Ser1688 to Glu1733, and Ser1838 to Gln1925. Over residues Gln1345–Val1355 the composition is skewed to polar residues. Over residues Ser1376–Lys1393 the composition is skewed to low complexity. Polar residues-rich tracts occupy residues Ser1525 to Arg1543 and Arg1646 to Ser1662. Residues Gln1691 to Glu1705 are compositionally biased toward basic and acidic residues. Composition is skewed to polar residues over residues Gln1872–Thr1889 and Asn1898–Ser1911.

It localises to the golgi apparatus membrane. Its subcellular location is the cell junction. The protein resides in the cytoplasmic vesicle membrane. The protein localises to the cytoplasm. It is found in the cytoskeleton. Its function is as follows. GTPase-activating protein (GAP) for rhoa and cdc42. The chain is Rho GTPase-activating protein 21 (arhgap21) from Xenopus tropicalis (Western clawed frog).